The chain runs to 75 residues: Tetrahydromethanopterin S-methyltransferase subunit F (75 aa).

The chain crosses the membrane as a helical span at residues 53–73 (FAGLACGMVFAGVLLVPLLLL).

The protein belongs to the MtrF family. As to quaternary structure, the complex is composed of 8 subunits; MtrA, MtrB, MtrC, MtrD, MtrE, MtrF, MtrG and MtrH.

It localises to the cell membrane. It carries out the reaction 5-methyl-5,6,7,8-tetrahydromethanopterin + coenzyme M + 2 Na(+)(in) = 5,6,7,8-tetrahydromethanopterin + methyl-coenzyme M + 2 Na(+)(out). The protein operates within one-carbon metabolism; methanogenesis from CO(2); methyl-coenzyme M from 5,10-methylene-5,6,7,8-tetrahydromethanopterin: step 2/2. In terms of biological role, part of a complex that catalyzes the formation of methyl-coenzyme M and tetrahydromethanopterin from coenzyme M and methyl-tetrahydromethanopterin. This is an energy-conserving, sodium-ion translocating step. In Methanopyrus kandleri (strain AV19 / DSM 6324 / JCM 9639 / NBRC 100938), this protein is Tetrahydromethanopterin S-methyltransferase subunit F.